We begin with the raw amino-acid sequence, 305 residues long: MLKQRTIKSIVKTVGIGVHSGRKVELTLRPAAPDTGIVFSRVDLPTPVDIPASALSIGDTRLASVLQKDGVRVSTVEHLMSACAGLGIDNLYVDVTAEEIPIMDGSAATFVFLIQSAGIEEQNAAKKFIKVTKPVEIRDGDKFARLDPYFGFKLKFTIDFRHPAVDKTGQELEVDFANTSYVREIARARTFGFAHEVEMMRELGLARGGSMDNAIVLDEYRILNNDGLRYDDEFVKHKMLDAIGDLYVIGHPLLASYTAYKSGHGLNNALLRELLAHEQAYEIVTFDDPKTAPTGFGFDAQTAFA.

Zn(2+) is bound by residues histidine 78, histidine 237, and aspartate 241. Catalysis depends on histidine 264, which acts as the Proton donor.

It belongs to the LpxC family. Zn(2+) serves as cofactor.

It catalyses the reaction a UDP-3-O-[(3R)-3-hydroxyacyl]-N-acetyl-alpha-D-glucosamine + H2O = a UDP-3-O-[(3R)-3-hydroxyacyl]-alpha-D-glucosamine + acetate. The protein operates within glycolipid biosynthesis; lipid IV(A) biosynthesis; lipid IV(A) from (3R)-3-hydroxytetradecanoyl-[acyl-carrier-protein] and UDP-N-acetyl-alpha-D-glucosamine: step 2/6. Catalyzes the hydrolysis of UDP-3-O-myristoyl-N-acetylglucosamine to form UDP-3-O-myristoylglucosamine and acetate, the committed step in lipid A biosynthesis. This is UDP-3-O-acyl-N-acetylglucosamine deacetylase from Burkholderia mallei (strain NCTC 10247).